A 493-amino-acid chain; its full sequence is Cytochrome P450 2A9 (493 aa).

Position 438 (cysteine 438) interacts with heme.

Belongs to the cytochrome P450 family. Requires heme as cofactor. Liver.

The protein resides in the endoplasmic reticulum membrane. It is found in the microsome membrane. The enzyme catalyses an organic molecule + reduced [NADPH--hemoprotein reductase] + O2 = an alcohol + oxidized [NADPH--hemoprotein reductase] + H2O + H(+). Functionally, cytochromes P450 are a group of heme-thiolate monooxygenases. In liver microsomes, this enzyme is involved in an NADPH-dependent electron transport pathway. It oxidizes a variety of structurally unrelated compounds, including steroids, fatty acids, and xenobiotics. This is Cytochrome P450 2A9 (CYP2A9) from Mesocricetus auratus (Golden hamster).